We begin with the raw amino-acid sequence, 236 residues long: Uridylate kinase (236 aa).

Residue 12–15 (KISG) participates in ATP binding. Residues 20–25 (GKKGFG) are involved in allosteric activation by GTP. Glycine 54 contributes to the UMP binding site. ATP-binding residues include glycine 55 and arginine 59. UMP is bound by residues aspartate 72 and 133–140 (TGNPYFST). ATP contacts are provided by tyrosine 166 and aspartate 169.

This sequence belongs to the UMP kinase family. As to quaternary structure, homohexamer.

The protein resides in the cytoplasm. The catalysed reaction is UMP + ATP = UDP + ADP. It participates in pyrimidine metabolism; CTP biosynthesis via de novo pathway; UDP from UMP (UMPK route): step 1/1. Allosterically activated by GTP. Inhibited by UTP. Its function is as follows. Catalyzes the reversible phosphorylation of UMP to UDP. In Clostridium novyi (strain NT), this protein is Uridylate kinase.